The chain runs to 94 residues: MCYGHNQSLSSRSSLRRRSHDGEDDSVVDDLRDRLAETEARLRRARAREAELSRRLEHMKRFVSVMEIIETFLERRFQEQKDRIARLFSPVSTK.

The disordered stretch occupies residues Met1–Val27. A coiled-coil region spans residues Glu23–Arg61.

In terms of assembly, interacts with SPK1B/ASK2.

This chain is Protein SKIP34 (SKIP34), found in Arabidopsis thaliana (Mouse-ear cress).